Consider the following 441-residue polypeptide: MRISSTLLQRSKQLIDKYALYVPKTGSFPKGFEVGYTASGVKKNGSLDLGVILNTNKSRPSTAAAVFTTNKFKAAPVLTSKKVLETARGKNINAIVVNSGCANSVTGDLGMKDAQVMIDLVNDKIGQKNSTLVMSTGVIGQRLQMDKISTGINKIFGEEKFGSDFNSWLNVAKSICTTDTFPKLVTSRFKLPSGTEYTLTGMAKGAGMICPNMATLLGFIVTDLPIESKALQKMLTFATTRSFNCISVDGDMSTNDTICMLANGAIDTKEINEDSKDFEQVKLQATEFAQRLAQLVVRDGEGSTKFVTVNVKNALHFEDAKIIAESISNSMLVKTALYGQDANWGRILCAIGYAKLNDLKSLDVNKINVSFIATDNSEPRELKLVANGVPQLEIDETRASEILALNDLEVSVDLGTGDQAAQFWTCDLSHEYVTINGDYRS.

The transit peptide at 1-8 directs the protein to the mitochondrion; sequence MRISSTLL. Positions 177, 204, 215, 301, 436, and 441 each coordinate substrate. Catalysis depends on T215, which acts as the Nucleophile.

This sequence belongs to the ArgJ family. As to quaternary structure, heterodimer of an alpha and a beta chain. In terms of processing, the alpha and beta chains are autoproteolytically processed from a single precursor protein within the mitochondrion.

The protein resides in the mitochondrion matrix. The catalysed reaction is N(2)-acetyl-L-ornithine + L-glutamate = N-acetyl-L-glutamate + L-ornithine. The enzyme catalyses L-glutamate + acetyl-CoA = N-acetyl-L-glutamate + CoA + H(+). Its pathway is amino-acid biosynthesis; L-arginine biosynthesis; L-ornithine and N-acetyl-L-glutamate from L-glutamate and N(2)-acetyl-L-ornithine (cyclic): step 1/1. It functions in the pathway amino-acid biosynthesis; L-arginine biosynthesis; N(2)-acetyl-L-ornithine from L-glutamate: step 1/4. In terms of biological role, catalyzes two activities which are involved in the cyclic version of arginine biosynthesis: the synthesis of acetylglutamate from glutamate and acetyl-CoA, and of ornithine by transacetylation between acetylornithine and glutamate. This chain is Arginine biosynthesis bifunctional protein ArgJ, mitochondrial, found in Saccharomyces cerevisiae (strain Lalvin EC1118 / Prise de mousse) (Baker's yeast).